The chain runs to 383 residues: ATP phosphoribosyltransferase regulatory subunit (383 aa).

This sequence belongs to the class-II aminoacyl-tRNA synthetase family. HisZ subfamily. Heteromultimer composed of HisG and HisZ subunits.

Its subcellular location is the cytoplasm. Its pathway is amino-acid biosynthesis; L-histidine biosynthesis; L-histidine from 5-phospho-alpha-D-ribose 1-diphosphate: step 1/9. Its function is as follows. Required for the first step of histidine biosynthesis. May allow the feedback regulation of ATP phosphoribosyltransferase activity by histidine. This Cupriavidus taiwanensis (strain DSM 17343 / BCRC 17206 / CCUG 44338 / CIP 107171 / LMG 19424 / R1) (Ralstonia taiwanensis (strain LMG 19424)) protein is ATP phosphoribosyltransferase regulatory subunit.